Consider the following 31-residue polypeptide: uncharacterized protein (31 aa).

Positions 1-31 (MKKLERMSEVSQMCSEAKKNRKRMSVVSSVA) are disordered.

This is an uncharacterized protein from Sulfolobus islandicus filamentous virus (isolate Iceland/Hveragerdi) (SIFV).